The sequence spans 452 residues: Glycylpeptide N-tetradecanoyltransferase (452 aa).

Residues 38–41, 171–173, and 179–183 each bind tetradecanoyl-CoA; these read YKFW, LCI, and SKRLA. L452 serves as the catalytic Proton acceptor; via carboxylate.

The protein belongs to the NMT family. Monomer.

It localises to the cytoplasm. It carries out the reaction N-terminal glycyl-[protein] + tetradecanoyl-CoA = N-tetradecanoylglycyl-[protein] + CoA + H(+). Functionally, adds a myristoyl group to the N-terminal glycine residue of certain cellular proteins. This Eremothecium gossypii (strain ATCC 10895 / CBS 109.51 / FGSC 9923 / NRRL Y-1056) (Yeast) protein is Glycylpeptide N-tetradecanoyltransferase (NMT1).